Reading from the N-terminus, the 375-residue chain is Growth/differentiation factor 8 (375 aa).

Residues 1–18 (MQKLQISVYIYLFMLIVA) form the signal peptide. The propeptide occupies 19-266 (GPVDLNENSE…VTDTPKRSRR (248 aa)). Asn-71 is a glycosylation site (N-linked (GlcNAc...) asparagine). 4 disulfides stabilise this stretch: Cys-272–Cys-282, Cys-281–Cys-340, Cys-309–Cys-372, and Cys-313–Cys-374.

It belongs to the TGF-beta family. Homodimer; disulfide-linked. Interacts with WFIKKN2, leading to inhibit its activity. Interacts with FSTL3. Synthesized as large precursor molecule that undergoes proteolytic cleavage to generate an N-terminal propeptide and a disulfide linked C-terminal dimer, which is the biologically active molecule. The circulating form consists of a latent complex of the C-terminal dimer and other proteins, including its propeptide, which maintain the C-terminal dimer in a latent, inactive state. Ligand activation requires additional cleavage of the prodomain by a tolloid-like metalloproteinase.

The protein resides in the secreted. Functionally, acts specifically as a negative regulator of skeletal muscle growth. This Lepus capensis (Brown hare) protein is Growth/differentiation factor 8 (MSTN).